A 517-amino-acid polypeptide reads, in one-letter code: Perilipin-1 (517 aa).

Ser-81 carries the post-translational modification Phosphoserine. At Thr-85 the chain carries Phosphothreonine. A phosphoserine mark is found at Ser-126, Ser-130, Ser-132, Ser-137, and Ser-174. Positions 197–217 (VESAPSSGRQKTQKAPKAKPS) are disordered. Thr-224, Thr-299, and Thr-301 each carry phosphothreonine. A disordered region spans residues 285–321 (HNLAASKDENHEDQTDTEGEETDEEEEEEESEAEENV). The required for interaction with CIDEC stretch occupies residues 291–322 (KDENHEDQTDTEGEETDEEEEEEESEAEENVL). The span at 299–319 (TDTEGEETDEEEEEEESEAEE) shows a compositional bias: acidic residues. A phosphoserine mark is found at Ser-315, Ser-385, Ser-387, Pro-408, Ser-411, Ser-434, Ser-436, Ser-440, Ser-460, Ser-492, and Ser-494. Residues 415 to 495 (PESEFQDIDN…KPARRVSDSF (81 aa)) are disordered. The segment covering 483–492 (PREKPARRVS) has biased composition (basic and acidic residues).

The protein belongs to the perilipin family. Interacts with ABHD5. Interacts with CIDEC. Interacts with AQP7. Major cAMP-dependent protein kinase substrate in adipocytes, also dephosphorylated by PP1. When phosphorylated, may be maximally sensitive to HSL. When unphosphorylated, may play a role in the inhibition of lipolysis, by acting as a barrier in lipid droplet. In terms of processing, the N-terminus is blocked. Adipocytes.

It localises to the endoplasmic reticulum. The protein localises to the lipid droplet. In terms of biological role, modulator of adipocyte lipid metabolism. Coats lipid storage droplets to protect them from breakdown by hormone-sensitive lipase (HSL). Its absence may result in leanness. Plays a role in unilocular lipid droplet formation by activating CIDEC. Their interaction promotes lipid droplet enlargement and directional net neutral lipid transfer. May modulate lipolysis and triglyceride levels. The polypeptide is Perilipin-1 (Plin1) (Rattus norvegicus (Rat)).